The sequence spans 285 residues: Phospholipid phosphatase 1 (285 aa).

Over 1 to 6 the chain is Cytoplasmic; it reads MFDKTR. A PDZ-binding; involved in localization to the apical cell membrane motif is present at residues 5-7; it reads TRL. A helical transmembrane segment spans residues 7 to 27; the sequence is LPYVALDVLCVLLAGLPFAIL. Residues 28–53 are Extracellular-facing; the sequence is TSRHTPFQRGLFCNDESIKYPYKEDT. Residues 54–74 traverse the membrane as a helical segment; sequence IPYPLLGGIIIPFSIIVMIVG. Residues 75-94 are Cytoplasmic-facing; sequence ETLSVYFNLLHSNSFIRNNY. The chain crosses the membrane as a helical span at residues 95–115; it reads IATIYKAIGTFLFGAAASQSL. The Extracellular segment spans residues 116–164; that stretch reads TDIAKYSIGRLRPHFLDVCDPDWSKINCSDGYIENYICRGNAQKVKEGR. The segment at 120–128 is phosphatase sequence motif I; sequence KYSIGRLRP. Asn142 carries N-linked (GlcNAc...) asparagine glycosylation. A helical transmembrane segment spans residues 165 to 185; the sequence is LSFYSGHSSFSMYCMLFVALY. Positions 168-171 are phosphatase sequence motif II; the sequence is YSGH. His171 functions as the Proton donors in the catalytic mechanism. Topologically, residues 186–196 are cytoplasmic; sequence LQARMKGDWAR. Residues 197-216 form a helical membrane-spanning segment; sequence LLRPTLQFGLVAVSIYVGLS. Positions 216-227 are phosphatase sequence motif III; it reads SRVSDYKHHWSD. Topologically, residues 217–229 are extracellular; it reads RVSDYKHHWSDVL. His223 functions as the Nucleophile in the catalytic mechanism. A helical membrane pass occupies residues 230–250; it reads TGLIQGALVAIVVAVYVSDFF. Residues 251–285 are Cytoplasmic-facing; sequence KERNSPFKERKEEDSHTTLHETPTTGNHYRNSHQP. Residues 257-269 are compositionally biased toward basic and acidic residues; it reads FKERKEEDSHTTL. The disordered stretch occupies residues 257 to 285; it reads FKERKEEDSHTTLHETPTTGNHYRNSHQP. Residues 270–285 show a composition bias toward polar residues; the sequence is HETPTTGNHYRNSHQP.

It belongs to the PA-phosphatase related phosphoesterase family. In terms of assembly, forms functional homodimers and homooligomers that are not required for substrate recognition and catalytic activity. Can also form heterooligomers with PLPP2 and PLPP3. Post-translationally, N-glycosylated. N-linked sugars are of the complex type. N-glycosylation is not required for the phosphatase activity.

It is found in the cell membrane. The protein localises to the apical cell membrane. It localises to the membrane raft. Its subcellular location is the membrane. The protein resides in the caveola. It carries out the reaction a 1,2-diacyl-sn-glycero-3-phosphate + H2O = a 1,2-diacyl-sn-glycerol + phosphate. It catalyses the reaction 1,2-dihexadecanoyl-sn-glycero-3-phosphate + H2O = 1,2-dihexadecanoyl-sn-glycerol + phosphate. The catalysed reaction is 1,2-di-(9Z-octadecenoyl)-sn-glycero-3-phosphate + H2O = 1,2-di-(9Z-octadecenoyl)-sn-glycerol + phosphate. The enzyme catalyses a monoacyl-sn-glycero-3-phosphate + H2O = a monoacylglycerol + phosphate. It carries out the reaction (9Z)-octadecenoyl-sn-glycero-3-phosphate + H2O = (9Z-octadecenoyl)-glycerol + phosphate. It catalyses the reaction a 1-acyl-sn-glycero-3-phosphate + H2O = a 1-acyl-sn-glycerol + phosphate. The catalysed reaction is 1-(9Z-octadecenoyl)-sn-glycero-3-phosphate + H2O = 1-(9Z-octadecenoyl)-sn-glycerol + phosphate. The enzyme catalyses a 1,2-diacyl-sn-glycerol 3-diphosphate + H2O = a 1,2-diacyl-sn-glycero-3-phosphate + phosphate + H(+). It carries out the reaction sphing-4-enine 1-phosphate + H2O = sphing-4-enine + phosphate. It catalyses the reaction an N-acylsphing-4-enine 1-phosphate + H2O = an N-acylsphing-4-enine + phosphate. The catalysed reaction is N-(octanoyl)-sphing-4-enine-1-phosphate + H2O = N-octanoylsphing-4-enine + phosphate. The enzyme catalyses N-(9Z-octadecenoyl)-ethanolamine phosphate + H2O = N-(9Z-octadecenoyl) ethanolamine + phosphate. It carries out the reaction 1-hexadecanoyl-2-(9Z-octadecenoyl)-sn-glycero-3-phosphate + H2O = 1-hexadecanoyl-2-(9Z-octadecenoyl)-sn-glycerol + phosphate. It functions in the pathway lipid metabolism; phospholipid metabolism. Magnesium-independent phospholipid phosphatase. Insensitive to N-ethylmaleimide. Magnesium-independent phospholipid phosphatase of the plasma membrane that catalyzes the dephosphorylation of a variety of glycerolipid and sphingolipid phosphate esters including phosphatidate/PA, lysophosphatidate/LPA, diacylglycerol pyrophosphate/DGPP, sphingosine 1-phosphate/S1P and ceramide 1-phosphate/C1P. Also acts on N-oleoyl ethanolamine phosphate/N-(9Z-octadecenoyl)-ethanolamine phosphate, a potential physiological compound. Through its extracellular phosphatase activity allows both the hydrolysis and the cellular uptake of these bioactive lipid mediators from the milieu, regulating signal transduction in different cellular processes. It is for instance essential for the extracellular hydrolysis of S1P and subsequent conversion into intracellular S1P. Involved in the regulation of inflammation, platelets activation, cell proliferation and migration among other processes. May also have an intracellular activity to regulate phospholipid-mediated signaling pathways. The polypeptide is Phospholipid phosphatase 1 (Sus scrofa (Pig)).